The primary structure comprises 258 residues: UPF0246 protein Pnuc_0753 (258 aa).

The protein belongs to the UPF0246 family.

In Polynucleobacter asymbioticus (strain DSM 18221 / CIP 109841 / QLW-P1DMWA-1) (Polynucleobacter necessarius subsp. asymbioticus), this protein is UPF0246 protein Pnuc_0753.